A 389-amino-acid polypeptide reads, in one-letter code: Cytochrome b (389 aa).

4 helical membrane-spanning segments follow: residues 32 to 52 (FGSL…FLAM), 76 to 98 (WLIR…LHIA), 113 to 133 (TWTI…LGYT), and 179 to 199 (FFSL…MHMI). Heme b is bound by residues His-82 and His-96. Heme b-binding residues include His-183 and His-197. Position 202 (His-202) interacts with a ubiquinone. The next 4 helical transmembrane spans lie at 225–245 (YLIK…IIIF), 289–309 (LFGV…PLLD), 321–341 (IGKL…FIGA), and 348–368 (YVAI…FFIP).

It belongs to the cytochrome b family. Fungal cytochrome b-c1 complex contains 10 subunits; 3 respiratory subunits, 2 core proteins and 5 low-molecular weight proteins. Cytochrome b-c1 complex is a homodimer. Heme b serves as cofactor.

Its subcellular location is the mitochondrion inner membrane. Component of the ubiquinol-cytochrome c reductase complex (complex III or cytochrome b-c1 complex) that is part of the mitochondrial respiratory chain. The b-c1 complex mediates electron transfer from ubiquinol to cytochrome c. Contributes to the generation of a proton gradient across the mitochondrial membrane that is then used for ATP synthesis. The protein is Cytochrome b (cob) of Schizosaccharomyces japonicus (Fission yeast).